The sequence spans 89 residues: Small ribosomal subunit protein uS15 (89 aa).

It belongs to the universal ribosomal protein uS15 family. Part of the 30S ribosomal subunit. Forms a bridge to the 50S subunit in the 70S ribosome, contacting the 23S rRNA.

In terms of biological role, one of the primary rRNA binding proteins, it binds directly to 16S rRNA where it helps nucleate assembly of the platform of the 30S subunit by binding and bridging several RNA helices of the 16S rRNA. Its function is as follows. Forms an intersubunit bridge (bridge B4) with the 23S rRNA of the 50S subunit in the ribosome. This Roseobacter denitrificans (strain ATCC 33942 / OCh 114) (Erythrobacter sp. (strain OCh 114)) protein is Small ribosomal subunit protein uS15.